The chain runs to 577 residues: Zinc finger-containing ubiquitin peptidase 1 (577 aa).

A C2H2-type 1 zinc finger spans residues 2–24; sequence LSCDICGETVTSEPDRKAHLIVH. The C2H2-type 2; atypical zinc finger occupies 29–52; that stretch reads IICPFCKLSGINYNEMCFHIETAH. 2 C2H2-type zinc fingers span residues 153-176 and 192-214; these read PECP…KTKH and YDCP…VDLH. Residues 225–247 form an MIU region; it reads DRVQCSSDRELAHQLQQEEERKR. The span at 231–261 shows a compositional bias: basic and acidic residues; it reads SDRELAHQLQQEEERKRKSEESRQEREEFQK. The disordered stretch occupies residues 231 to 262; the sequence is SDRELAHQLQQEEERKRKSEESRQEREEFQKL. Residues 248-273 are zUBD/ZHA; that stretch reads KSEESRQEREEFQKLQRQYGLDNSGG. An N6-acetyllysine modification is found at Lys-261. The active-site Nucleophile is the Cys-359. His-490 acts as the Proton acceptor in catalysis. Asp-511 is a catalytic residue.

The protein belongs to the peptidase C78 family. ZUFSP subfamily. In terms of assembly, interacts with RPA1 and RPA2.

It is found in the cytoplasm. The protein resides in the nucleus. It catalyses the reaction Thiol-dependent hydrolysis of ester, thioester, amide, peptide and isopeptide bonds formed by the C-terminal Gly of ubiquitin (a 76-residue protein attached to proteins as an intracellular targeting signal).. Deubiquitinase with endodeubiquitinase activity that specifically interacts with and cleaves 'Lys-63'-linked long polyubiquitin chains. Shows only weak activity against 'Lys-11' and 'Lys-48'-linked chains. Plays an important role in genome stability pathways, functioning to prevent spontaneous DNA damage and also promote cellular survival in response to exogenous DNA damage. Modulates the ubiquitination status of replication protein A (RPA) complex proteins in response to replication stress. This Rattus norvegicus (Rat) protein is Zinc finger-containing ubiquitin peptidase 1.